The sequence spans 305 residues: Dihydroorotate dehydrogenase B (NAD(+)), catalytic subunit (305 aa).

FMN contacts are provided by residues S23 and 47-48 (KG). Substrate contacts are provided by residues K47 and 71-75 (NAIGL). Residues N101 and N129 each coordinate FMN. A substrate-binding site is contributed by N129. The active-site Nucleophile is C132. FMN contacts are provided by K167 and I193. 194 to 195 (NT) serves as a coordination point for substrate. Residues G219, 245-246 (GG), and 267-268 (GT) each bind FMN.

Belongs to the dihydroorotate dehydrogenase family. Type 1 subfamily. In terms of assembly, heterotetramer of 2 PyrK and 2 PyrD type B subunits. FMN is required as a cofactor.

The protein localises to the cytoplasm. It carries out the reaction (S)-dihydroorotate + NAD(+) = orotate + NADH + H(+). It participates in pyrimidine metabolism; UMP biosynthesis via de novo pathway; orotate from (S)-dihydroorotate (NAD(+) route): step 1/1. Functionally, catalyzes the conversion of dihydroorotate to orotate with NAD(+) as electron acceptor. This Geotalea daltonii (strain DSM 22248 / JCM 15807 / FRC-32) (Geobacter daltonii) protein is Dihydroorotate dehydrogenase B (NAD(+)), catalytic subunit (pyrD).